We begin with the raw amino-acid sequence, 352 residues long: Holliday junction branch migration complex subunit RuvB (352 aa).

The segment at 4–185 (PDRLISAVSG…FGIVQRLEFY (182 aa)) is large ATPase domain (RuvB-L). ATP is bound by residues Ile-24, Arg-25, Gly-66, Lys-69, Thr-70, Thr-71, 132–134 (EDF), Arg-175, Tyr-185, and Arg-222. A Mg(2+)-binding site is contributed by Thr-70. Residues 186–256 (NVEDLATIVS…IADKALNLLD (71 aa)) form a small ATPAse domain (RuvB-S) region. Positions 259–352 (ERGFDHLDRR…SDLFTSEDGN (94 aa)) are head domain (RuvB-H). Residues Arg-295, Arg-314, and Arg-319 each coordinate DNA.

Belongs to the RuvB family. Homohexamer. Forms an RuvA(8)-RuvB(12)-Holliday junction (HJ) complex. HJ DNA is sandwiched between 2 RuvA tetramers; dsDNA enters through RuvA and exits via RuvB. An RuvB hexamer assembles on each DNA strand where it exits the tetramer. Each RuvB hexamer is contacted by two RuvA subunits (via domain III) on 2 adjacent RuvB subunits; this complex drives branch migration. In the full resolvosome a probable DNA-RuvA(4)-RuvB(12)-RuvC(2) complex forms which resolves the HJ.

It is found in the cytoplasm. It carries out the reaction ATP + H2O = ADP + phosphate + H(+). The RuvA-RuvB-RuvC complex processes Holliday junction (HJ) DNA during genetic recombination and DNA repair, while the RuvA-RuvB complex plays an important role in the rescue of blocked DNA replication forks via replication fork reversal (RFR). RuvA specifically binds to HJ cruciform DNA, conferring on it an open structure. The RuvB hexamer acts as an ATP-dependent pump, pulling dsDNA into and through the RuvAB complex. RuvB forms 2 homohexamers on either side of HJ DNA bound by 1 or 2 RuvA tetramers; 4 subunits per hexamer contact DNA at a time. Coordinated motions by a converter formed by DNA-disengaged RuvB subunits stimulates ATP hydrolysis and nucleotide exchange. Immobilization of the converter enables RuvB to convert the ATP-contained energy into a lever motion, pulling 2 nucleotides of DNA out of the RuvA tetramer per ATP hydrolyzed, thus driving DNA branch migration. The RuvB motors rotate together with the DNA substrate, which together with the progressing nucleotide cycle form the mechanistic basis for DNA recombination by continuous HJ branch migration. Branch migration allows RuvC to scan DNA until it finds its consensus sequence, where it cleaves and resolves cruciform DNA. This Pseudomonas paraeruginosa (strain DSM 24068 / PA7) (Pseudomonas aeruginosa (strain PA7)) protein is Holliday junction branch migration complex subunit RuvB.